Reading from the N-terminus, the 143-residue chain is MAKKVAGQLKLQVKAGSANPSPPIGPALGQRGINIMEFCKAFNAATQEMEKGMPIPVVITYYQDKSFTFAMKQPPVSYWLKKEAKITSGSKTPGKGAKAGTLTKAQIKTIAEAKMKDLNAADIEGAMAMIEGSARAMGLEVVG.

The protein belongs to the universal ribosomal protein uL11 family. As to quaternary structure, part of the ribosomal stalk of the 50S ribosomal subunit. Interacts with L10 and the large rRNA to form the base of the stalk. L10 forms an elongated spine to which L12 dimers bind in a sequential fashion forming a multimeric L10(L12)X complex. In terms of processing, one or more lysine residues are methylated.

Functionally, forms part of the ribosomal stalk which helps the ribosome interact with GTP-bound translation factors. The chain is Large ribosomal subunit protein uL11 from Rhizobium etli (strain ATCC 51251 / DSM 11541 / JCM 21823 / NBRC 15573 / CFN 42).